A 122-amino-acid polypeptide reads, in one-letter code: Large ribosomal subunit protein uL14 (122 aa).

The protein belongs to the universal ribosomal protein uL14 family. In terms of assembly, part of the 50S ribosomal subunit. Forms a cluster with proteins L3 and L19. In the 70S ribosome, L14 and L19 interact and together make contacts with the 16S rRNA in bridges B5 and B8.

In terms of biological role, binds to 23S rRNA. Forms part of two intersubunit bridges in the 70S ribosome. The sequence is that of Large ribosomal subunit protein uL14 from Xylella fastidiosa (strain 9a5c).